The chain runs to 461 residues: Bifunctional protein GlmU (461 aa).

The tract at residues 1-227 (MEVIALILAA…PDEVLGVNDR (227 aa)) is pyrophosphorylase. Residues 8–11 (LAAG), Lys22, Gln73, 78–79 (GT), 100–102 (YGD), Gly137, Glu152, Asn167, and Asn225 contribute to the UDP-N-acetyl-alpha-D-glucosamine site. Position 102 (Asp102) interacts with Mg(2+). Asn225 is a Mg(2+) binding site. The segment at 228-248 (RQLAELERIYQVHQARALMER) is linker. Residues 249-461 (GVTLRDPARF…EKARKESCAE (213 aa)) form an N-acetyltransferase region. Positions 332 and 350 each coordinate UDP-N-acetyl-alpha-D-glucosamine. His362 acts as the Proton acceptor in catalysis. UDP-N-acetyl-alpha-D-glucosamine contacts are provided by Tyr365 and Asn376. Residues Ala379, 385-386 (NY), Ser404, Ala422, and Arg439 each bind acetyl-CoA.

This sequence in the N-terminal section; belongs to the N-acetylglucosamine-1-phosphate uridyltransferase family. In the C-terminal section; belongs to the transferase hexapeptide repeat family. As to quaternary structure, homotrimer. Mg(2+) serves as cofactor.

Its subcellular location is the cytoplasm. It catalyses the reaction alpha-D-glucosamine 1-phosphate + acetyl-CoA = N-acetyl-alpha-D-glucosamine 1-phosphate + CoA + H(+). It carries out the reaction N-acetyl-alpha-D-glucosamine 1-phosphate + UTP + H(+) = UDP-N-acetyl-alpha-D-glucosamine + diphosphate. It participates in nucleotide-sugar biosynthesis; UDP-N-acetyl-alpha-D-glucosamine biosynthesis; N-acetyl-alpha-D-glucosamine 1-phosphate from alpha-D-glucosamine 6-phosphate (route II): step 2/2. It functions in the pathway nucleotide-sugar biosynthesis; UDP-N-acetyl-alpha-D-glucosamine biosynthesis; UDP-N-acetyl-alpha-D-glucosamine from N-acetyl-alpha-D-glucosamine 1-phosphate: step 1/1. The protein operates within bacterial outer membrane biogenesis; LPS lipid A biosynthesis. Functionally, catalyzes the last two sequential reactions in the de novo biosynthetic pathway for UDP-N-acetylglucosamine (UDP-GlcNAc). The C-terminal domain catalyzes the transfer of acetyl group from acetyl coenzyme A to glucosamine-1-phosphate (GlcN-1-P) to produce N-acetylglucosamine-1-phosphate (GlcNAc-1-P), which is converted into UDP-GlcNAc by the transfer of uridine 5-monophosphate (from uridine 5-triphosphate), a reaction catalyzed by the N-terminal domain. This Methylococcus capsulatus (strain ATCC 33009 / NCIMB 11132 / Bath) protein is Bifunctional protein GlmU.